Consider the following 504-residue polypeptide: Maturase K (504 aa).

This sequence belongs to the intron maturase 2 family. MatK subfamily.

Its subcellular location is the plastid. The protein resides in the chloroplast. Usually encoded in the trnK tRNA gene intron. Probably assists in splicing its own and other chloroplast group II introns. In Cucumis sativus (Cucumber), this protein is Maturase K.